The primary structure comprises 341 residues: Hyaluronidase A (341 aa).

N-linked (GlcNAc...) asparagine glycosylation is found at Asn3, Asn68, and Asn83. 2 disulfide bridges follow: Cys23–Cys311 and Cys189–Cys201.

Belongs to the glycosyl hydrolase 56 family. In terms of tissue distribution, expressed by the venom gland.

It localises to the secreted. The enzyme catalyses Random hydrolysis of (1-&gt;4)-linkages between N-acetyl-beta-D-glucosamine and D-glucuronate residues in hyaluronate.. In terms of biological role, may hydrolyze high molecular weight hyaluronic acid to produce small oligosaccharides. In Vespa velutina (Asian yellow-legged hornet), this protein is Hyaluronidase A.